We begin with the raw amino-acid sequence, 329 residues long: MTCEVKEKGRVGTINPIFTCQPAGAQFVSIGIKDCIGIVHGGQGCVMFVRLIFSQHYKESFELASSSLHEDGAVFGPCGRVEEAVDVLLSRYPDVKVVPIITTCSTEIIGDDVDGVIKKLNEGLLKEKFPDREVHLIAMHTPSFVGSMISGYDVAVRDVVRHFAKREAPNDKINLLTGWVNPGDVKELKHLLGEMDIEANVLFEIESFDSPHSADGSLVSHGNTHHRGSDRHRQCPTFPEPLRRHQGRRVSAEEIRRSRRSSARPRSHPQYRHLPAEPEEGDGKPIPQSLAHERGVAIDALADLTHMFLAEKRVAIYGAPDLVIGLAEF.

4 residues coordinate [8Fe-7S] cluster: Cys20, Cys45, Cys104, and Ser143. The tract at residues 213-288 (SADGSLVSHG…EEGDGKPIPQ (76 aa)) is disordered. The segment covering 257–271 (RSRRSSARPRSHPQY) has biased composition (basic residues).

Belongs to the NifD/NifK/NifE/NifN family. As to quaternary structure, hexamer of two alpha, two beta, and two delta chains. [8Fe-7S] cluster serves as cofactor.

It carries out the reaction N2 + 8 reduced [2Fe-2S]-[ferredoxin] + 16 ATP + 16 H2O = H2 + 8 oxidized [2Fe-2S]-[ferredoxin] + 2 NH4(+) + 16 ADP + 16 phosphate + 6 H(+). This iron-iron protein is part of the nitrogenase complex that catalyzes the key enzymatic reactions in nitrogen fixation. Other nitrogenase complexes utilize a molybdenum-iron protein or a vanadium-iron protein. This chain is Nitrogenase iron-iron protein beta chain (anfK), found in Ruminiclostridium hungatei (Clostridium hungatei).